The sequence spans 1063 residues: MALQVELIPTGEIIRVVHPHRPCKLALGSDGVRVTMESALTARDRVGVQDFVLLENFTSEAAFIENLRRRFRENLIYTYIGPVLVSVNPYRDLQIYSRQHMERYRGVSFYEVPPHLFAVADTVYRALRTERRDQAVMISGESGAGKTEATKRLLQFYAETCPAPERGGAVRDRLLQSNPVLEAFGNAKTLRNDNSSRFGKYMDVQFDFKGAPVGGHILSYLLEKSRVVHQNHGERNFHIFYQLLEGGEEETLRRLGLERNPQSYLYLVKGQCAKVSSINDKSDWKVVRKALTVIDFTEDEVEDLLSIVASVLHLGNTHFAADEESNAQVTTENQLKYLTRLLGVEGSTLREALTHRKIIAKGEELLSPLNLEQAAYARDALAKAVYSRTFTWLVAKINRSLASKDAESPSWRSTTVLGLLDIYGFEVFQHNSFEQFCINYCNEKLQQLFIELTLKSEQEEYEAEGIAWEPVQYFNNKIICDLVEEKFKGIISILDEECLRPGEATDLTFLEKLEDTIKQHPHFLTHKLADQRTRKSLDRGEFRLLHYAGEVTYNVTGFLDKNNDLLFRNLKETMCSSENPILGQCFDRSELSDKKRPETVATQFKMSLLELVEILKSKEPAYVRCIKPNDSKQPGRFDEVLIRHQVKYLGLMENLRVRRAGFAYRRKYEAFLQRYKSLCPETWPTWTGRPQDGVTVLVRHLGYKPEEYKMGRTKIFIRFPKTLFATEDALEIRRQSLATKIQATWRGFHCRQKFLRVKRSAICIQSWWRGTLGRRKAAKRKWAAQTIRRLIQGFILRHAPRCPENAFFVDHVRTSFLLNLRRQLPRNILDTSWPTPPPALREASELLRELCRKNMVWKYCRSISPEWKQQLQQKAVASEIFKGKKDNYPQSVPRLFISTRLGADEINPRVLQALGSEPIQYAVPVVKYDRKGYKPRSRQLLLTPNAVVIVEDAKVKQRIEYTNLTGISVSSLSDSLFVLHVQREDNKQKGDVVLQSDHVIETLTKTALSADRVNNININQGSITFAGGPGRDGIIDFTPGSELLITKAKNGHLAVVAPRLNSR.

An N-acetylmethionine modification is found at M1. Residues 47–731 (GVQDFVLLEN…TLFATEDALE (685 aa)) enclose the Myosin motor domain. Residues N88, Y96, 139-148 (SGESGAGKTE), and 192-196 (NDNSS) contribute to the ATP site. N6-methyllysine is present on K383. The residue at position 408 (S408) is a Phosphoserine. At K486 the chain carries N6-acetyllysine. S536 carries the phosphoserine modification. An actin-binding region spans residues 608–630 (LLELVEILKSKEPAYVRCIKPND). IQ domains are found at residues 734–757 (RQSL…FLRV) and 758–786 (KRSA…AAQT). S864 and S1041 each carry phosphoserine. In terms of domain architecture, TH1 spans 885-1059 (KDNYPQSVPR…NGHLAVVAPR (175 aa)).

Belongs to the TRAFAC class myosin-kinesin ATPase superfamily. Myosin family. In terms of assembly, interacts (via its IQ motifs) with CABP1 and CIB1; the interaction with CABP1 and CIB1 is calcium-dependent. Interacts (via tail domain) with PLEKHB1 (via PH domain); the interaction is not affected by the presence or absence of calcium and CALM. Interacts with POLR1A. Interacts with POLR2A. Component of the B-WICH complex, at least composed of SMARCA5/SNF2H, BAZ1B/WSTF, SF3B1, DEK, MYO1C, ERCC6, MYBBP1A and DDX21. Interacts (via its IQ motifs) with CALM; this precludes interaction with YWHAB. Interacts with YWHAB; this precludes interaction with CALM. Interacts with RPS6. Interacts with actin. Interacts with LLPH. Interacts with GLUT4. Interacts (via its IQ motifs) with SH3BGRL3; the interaction is dependent on calcium and takes place at membrane ruffles. Post-translationally, isoform 2 contains a N-acetylmethionine at position 1. In terms of tissue distribution, widely expressed.

The protein resides in the cytoplasm. The protein localises to the nucleus. It is found in the cell cortex. Its subcellular location is the cell projection. It localises to the ruffle membrane. The protein resides in the cytoplasmic vesicle. The protein localises to the stereocilium membrane. It is found in the nucleolus. Its subcellular location is the nucleoplasm. In terms of biological role, myosins are actin-based motor molecules with ATPase activity. Unconventional myosins serve in intracellular movements. Their highly divergent tails are presumed to bind to membranous compartments, which would be moved relative to actin filaments. Involved in glucose transporter recycling in response to insulin by regulating movement of intracellular GLUT4-containing vesicles to the plasma membrane. Component of the hair cell's (the sensory cells of the inner ear) adaptation-motor complex. Acts as a mediator of adaptation of mechanoelectrical transduction in stereocilia of vestibular hair cells. Binds phosphoinositides and links the actin cytoskeleton to cellular membranes. Its function is as follows. Isoform 3 is involved in regulation of transcription. Associated with transcriptional active ribosomal genes. Appears to cooperate with the WICH chromatin-remodeling complex to facilitate transcription. Necessary for the formation of the first phosphodiester bond during transcription initiation. The protein is Unconventional myosin-Ic (MYO1C) of Bos taurus (Bovine).